The primary structure comprises 196 residues: Mpv17-like protein (196 aa).

The Cytoplasmic portion of the chain corresponds to 1–16; sequence MVSWWQALTRAAGRYP. The targeting to peroxisomes stretch occupies residues 16–55; the sequence is PWPANVLLYAGFFSGGDALQQVLRGGPADWQHTRHVATVA. A helical membrane pass occupies residues 17-34; sequence WPANVLLYAGFFSGGDAL. The Lumenal segment spans residues 35-50; that stretch reads QQVLRGGPADWQHTRH. The chain crosses the membrane as a helical span at residues 51 to 67; sequence VATVAVAFHANLNYVWL. At 68-90 the chain is on the cytoplasmic side; that stretch reads NLLERALPGRAPRTILAKVLCDQ. The helical transmembrane segment at 91–108 threads the bilayer; the sequence is ALGGPVYVSTFYAGMSIL. Topologically, residues 109-150 are lumenal; sequence QGKDDIFLDMRQKFWNTYKSGLMYWPFVQLINFSLIPIRWRT. The chain crosses the membrane as a helical span at residues 151 to 167; sequence AYTGLCGFLWATFLCFS. Over 168–196 the chain is Cytoplasmic; sequence QQEGDGTFKSAFTFRRIKVTNEVEKPSEK.

It belongs to the peroxisomal membrane protein PXMP2/4 family.

The protein resides in the peroxisome membrane. Participates in reactive oxygen species metabolism by up- or down-regulation of the genes of antioxidant enzymes. Protective against the mitochondrial apoptotic cascade. This chain is Mpv17-like protein (MPV17L), found in Bos taurus (Bovine).